The primary structure comprises 214 residues: Isochorismatase family protein 2B (214 aa).

The protein belongs to the isochorismatase family.

This Dictyostelium discoideum (Social amoeba) protein is Isochorismatase family protein 2B.